Here is a 155-residue protein sequence, read N- to C-terminus: Small ribosomal subunit protein uS7 (155 aa).

It belongs to the universal ribosomal protein uS7 family. Part of the 30S ribosomal subunit. Contacts proteins S9 and S11.

One of the primary rRNA binding proteins, it binds directly to 16S rRNA where it nucleates assembly of the head domain of the 30S subunit. Is located at the subunit interface close to the decoding center, probably blocks exit of the E-site tRNA. In Chlorobium phaeobacteroides (strain DSM 266 / SMG 266 / 2430), this protein is Small ribosomal subunit protein uS7.